A 386-amino-acid polypeptide reads, in one-letter code: Sulfate adenylyltransferase (386 aa).

Belongs to the sulfate adenylyltransferase family.

It catalyses the reaction sulfate + ATP + H(+) = adenosine 5'-phosphosulfate + diphosphate. It functions in the pathway sulfur metabolism; hydrogen sulfide biosynthesis; sulfite from sulfate: step 1/3. The polypeptide is Sulfate adenylyltransferase (Persephonella marina (strain DSM 14350 / EX-H1)).